A 263-amino-acid chain; its full sequence is Hydroxyethylthiazole kinase (263 aa).

Met-39 is a substrate binding site. Residues Lys-115 and Thr-160 each contribute to the ATP site. Gly-187 provides a ligand contact to substrate.

It belongs to the Thz kinase family. It depends on Mg(2+) as a cofactor.

It catalyses the reaction 5-(2-hydroxyethyl)-4-methylthiazole + ATP = 4-methyl-5-(2-phosphooxyethyl)-thiazole + ADP + H(+). Its pathway is cofactor biosynthesis; thiamine diphosphate biosynthesis; 4-methyl-5-(2-phosphoethyl)-thiazole from 5-(2-hydroxyethyl)-4-methylthiazole: step 1/1. Functionally, catalyzes the phosphorylation of the hydroxyl group of 4-methyl-5-beta-hydroxyethylthiazole (THZ). The polypeptide is Hydroxyethylthiazole kinase (Staphylococcus aureus (strain JH9)).